The sequence spans 106 residues: Iron-sulfur cluster assembly protein CyaY (106 aa).

This sequence belongs to the frataxin family.

Functionally, involved in iron-sulfur (Fe-S) cluster assembly. May act as a regulator of Fe-S biogenesis. The sequence is that of Iron-sulfur cluster assembly protein CyaY from Escherichia coli O6:H1 (strain CFT073 / ATCC 700928 / UPEC).